A 466-amino-acid chain; its full sequence is Cell division protein FtsP (466 aa).

The segment at residues 1–28 (MGNYSRRRFLQGSLAIVAGNVLPCAAMA) is a signal peptide (tat-type signal).

It belongs to the FtsP family. In terms of processing, predicted to be exported by the Tat system. The position of the signal peptide cleavage has not been experimentally proven.

The protein resides in the periplasm. In terms of biological role, cell division protein that is required for growth during stress conditions. May be involved in protecting or stabilizing the divisomal assembly under conditions of stress. This chain is Cell division protein FtsP, found in Gallibacterium anatis (strain UMN179) (Pasteurella anatis).